A 686-amino-acid chain; its full sequence is Protein arginine N-methyltransferase 7 (686 aa).

2 consecutive SAM-dependent MTase PRMT-type domains span residues 5–352 (SDDY…FSWW) and 357–686 (DLSL…FKFD).

Belongs to the class I-like SAM-binding methyltransferase superfamily. Protein arginine N-methyltransferase family. PRMT7 subfamily.

Its function is as follows. Essential arginine methyltransferase that can both catalyze the formation of omega-N monomethylarginine (MMA) and symmetrical dimethylarginine (sDMA). Specifically mediates the symmetrical dimethylation of arginine residues in the small nuclear ribonucleoproteins SmD1 and SmD3. The polypeptide is Protein arginine N-methyltransferase 7 (Art7) (Aedes aegypti (Yellowfever mosquito)).